The sequence spans 637 residues: DEAD-box ATP-dependent RNA helicase 37 (637 aa).

Disordered stretches follow at residues 1–68 (MRSS…QPSA) and 86–141 (GPAS…EEAT). 2 stretches are compositionally biased toward low complexity: residues 10–28 (ANAEESAPATGAAPTPVAN) and 46–68 (GQAPTTTAAPAPAPGPAAVQPSA). Positions 104–116 (GGRGGGGGGGGGW) are enriched in gly residues. The Q motif motif lies at 174–202 (NTFAEIDLGDALNENIRRCKYVKPTPVQR). Residues 205-389 (IPISIAGRDL…SDFLADYIFL (185 aa)) enclose the Helicase ATP-binding domain. 218–225 (AQTGSGKT) contacts ATP. The DEAD box signature appears at 333-336 (DEAD). Residues 416 to 567 (YLMDLLHAQK…EVPQWLERYS (152 aa)) enclose the Helicase C-terminal domain. A disordered region spans residues 570–610 (SSFGGGGGRNRRSGGARFGGRDFRRDNRGGGGGGYGGGGGG). The segment covering 588-597 (GGRDFRRDNR) has biased composition (basic and acidic residues). Positions 598 to 610 (GGGGGGYGGGGGG) are enriched in gly residues.

It belongs to the DEAD box helicase family. DDX3/DED1 subfamily.

It catalyses the reaction ATP + H2O = ADP + phosphate + H(+). The sequence is that of DEAD-box ATP-dependent RNA helicase 37 (PL10A) from Oryza sativa subsp. japonica (Rice).